A 204-amino-acid polypeptide reads, in one-letter code: Probable chorismate pyruvate-lyase (204 aa).

The substrate site is built by Arg-75, Leu-113, and Glu-160.

Belongs to the UbiC family.

Its subcellular location is the cytoplasm. It catalyses the reaction chorismate = 4-hydroxybenzoate + pyruvate. It participates in cofactor biosynthesis; ubiquinone biosynthesis. Removes the pyruvyl group from chorismate, with concomitant aromatization of the ring, to provide 4-hydroxybenzoate (4HB) for the ubiquinone pathway. The chain is Probable chorismate pyruvate-lyase from Alcanivorax borkumensis (strain ATCC 700651 / DSM 11573 / NCIMB 13689 / SK2).